The following is a 101-amino-acid chain: Urease subunit beta (101 aa).

Belongs to the urease beta subunit family. Heterotrimer of UreA (gamma), UreB (beta) and UreC (alpha) subunits. Three heterotrimers associate to form the active enzyme.

Its subcellular location is the cytoplasm. The enzyme catalyses urea + 2 H2O + H(+) = hydrogencarbonate + 2 NH4(+). It functions in the pathway nitrogen metabolism; urea degradation; CO(2) and NH(3) from urea (urease route): step 1/1. This Rhizobium rhizogenes (strain K84 / ATCC BAA-868) (Agrobacterium radiobacter) protein is Urease subunit beta.